The chain runs to 467 residues: Neutral protease 2 homolog NFIA_031120 (467 aa).

A signal peptide spans 1 to 19 (MKITALASAILAVVHGALA). A propeptide spanning residues 20–172 (LPARAPALDI…PASIKPLDRR (153 aa)) is cleaved from the precursor. 2 disulfides stabilise this stretch: C179–C251 and C258–C276. Residue H300 participates in Zn(2+) binding. Residue E301 is part of the active site. Zn(2+) contacts are provided by H304 and D315. A compositionally biased stretch (polar residues) spans 359–451 (WDGNSQPGQT…TMWDGSSEPG (93 aa)). The tract at residues 359 to 467 (WDGNSQPGQT…HTTWGNFYQA (109 aa)) is disordered.

It belongs to the peptidase M35 family. Zn(2+) serves as cofactor.

Its subcellular location is the secreted. The enzyme catalyses Preferential cleavage of bonds with hydrophobic residues in P1'. Also 3-Asn-|-Gln-4 and 8-Gly-|-Ser-9 bonds in insulin B chain.. In terms of biological role, secreted metalloproteinase that allows assimilation of proteinaceous substrates. Shows high activities on basic nuclear substrates such as histone and protamine. In Neosartorya fischeri (strain ATCC 1020 / DSM 3700 / CBS 544.65 / FGSC A1164 / JCM 1740 / NRRL 181 / WB 181) (Aspergillus fischerianus), this protein is Neutral protease 2 homolog NFIA_031120.